The chain runs to 95 residues: Small ubiquitin-related modifier 4 (95 aa).

Positions 17-95 constitute a Ubiquitin-like domain; it reads HINLKVAGQD…VFQQPTGGVY (79 aa). Glycine 93 is covalently cross-linked (Glycyl lysine isopeptide (Gly-Lys) (interchain with K-? in acceptor proteins)). Residues 94–95 constitute a propeptide that is removed on maturation; the sequence is VY.

The protein belongs to the ubiquitin family. SUMO subfamily. Interacts with SAE2. Covalently attached to a number of proteins. In terms of processing, in contrast to SUMO1, SUMO2 and SUMO3, seems to be insensitive to sentrin-specific proteases due to the presence of Pro-90. This may impair processing to mature form and conjugation to substrates. In terms of tissue distribution, expressed mainly in adult and embryonic kidney. Expressed at various levels in immune tissues, with the highest expression in the lymph node and spleen.

Functionally, ubiquitin-like protein which can be covalently attached to target lysines as a monomer. Does not seem to be involved in protein degradation and may modulate protein subcellular localization, stability or activity. Upon oxidative stress, conjugates to various anti-oxidant enzymes, chaperones, and stress defense proteins. May also conjugate to NFKBIA, TFAP2A and FOS, negatively regulating their transcriptional activity, and to NR3C1, positively regulating its transcriptional activity. Covalent attachment to its substrates requires prior activation by the E1 complex SAE1-SAE2 and linkage to the E2 enzyme UBE2I. This Homo sapiens (Human) protein is Small ubiquitin-related modifier 4 (SUMO4).